We begin with the raw amino-acid sequence, 587 residues long: Urease subunit alpha (587 aa).

The region spanning 134-572 is the Urease domain; sequence GGIDTHVHFI…LPLAQRYLYT (439 aa). Positions 139, 141, and 222 each coordinate Ni(2+). An N6-carboxylysine modification is found at K222. H224 provides a ligand contact to substrate. Positions 251 and 277 each coordinate Ni(2+). H325 functions as the Proton donor in the catalytic mechanism. D365 lines the Ni(2+) pocket.

This sequence belongs to the metallo-dependent hydrolases superfamily. Urease alpha subunit family. Heterotrimer of UreA (gamma), UreB (beta) and UreC (alpha) subunits. Three heterotrimers associate to form the active enzyme. Ni cation serves as cofactor. Carboxylation allows a single lysine to coordinate two nickel ions.

It is found in the cytoplasm. The catalysed reaction is urea + 2 H2O + H(+) = hydrogencarbonate + 2 NH4(+). It participates in nitrogen metabolism; urea degradation; CO(2) and NH(3) from urea (urease route): step 1/1. This Clostridium perfringens protein is Urease subunit alpha.